Reading from the N-terminus, the 28-residue chain is Phospholipase A2 3 (28 aa).

Belongs to the phospholipase A2 family. Group I subfamily. Ca(2+) is required as a cofactor. As to expression, expressed by the venom gland.

The protein localises to the secreted. It carries out the reaction a 1,2-diacyl-sn-glycero-3-phosphocholine + H2O = a 1-acyl-sn-glycero-3-phosphocholine + a fatty acid + H(+). Its function is as follows. Snake venom phospholipase A2 (PLA2) that inhibits neuromuscular transmission by blocking acetylcholine release from the nerve termini. PLA2 catalyzes the calcium-dependent hydrolysis of the 2-acyl groups in 3-sn-phosphoglycerides. This Micrurus nigrocinctus (Central American coral snake) protein is Phospholipase A2 3.